We begin with the raw amino-acid sequence, 284 residues long: 4-diphosphocytidyl-2-C-methyl-D-erythritol kinase (284 aa).

Residue Lys-10 is part of the active site. An ATP-binding site is contributed by Pro-95–Ser-105. Residue Asp-137 is part of the active site.

Belongs to the GHMP kinase family. IspE subfamily.

It carries out the reaction 4-CDP-2-C-methyl-D-erythritol + ATP = 4-CDP-2-C-methyl-D-erythritol 2-phosphate + ADP + H(+). Its pathway is isoprenoid biosynthesis; isopentenyl diphosphate biosynthesis via DXP pathway; isopentenyl diphosphate from 1-deoxy-D-xylulose 5-phosphate: step 3/6. Functionally, catalyzes the phosphorylation of the position 2 hydroxy group of 4-diphosphocytidyl-2C-methyl-D-erythritol. In Levilactobacillus brevis (strain ATCC 367 / BCRC 12310 / CIP 105137 / JCM 1170 / LMG 11437 / NCIMB 947 / NCTC 947) (Lactobacillus brevis), this protein is 4-diphosphocytidyl-2-C-methyl-D-erythritol kinase.